A 921-amino-acid polypeptide reads, in one-letter code: DNA mismatch repair protein MutS 1 (921 aa).

Residue 619 to 626 participates in ATP binding; it reads GPNMSGKS. Residues 837–887 are disordered; it reads FRDGAAQSGGAAAGSTAEPVATDGDPEHAPGEAAAEGPKGDERAASLDSET. The segment covering 840-853 has biased composition (low complexity); it reads GAAQSGGAAAGSTA.

The protein belongs to the DNA mismatch repair MutS family.

In terms of biological role, this protein is involved in the repair of mismatches in DNA. It is possible that it carries out the mismatch recognition step. This protein has a weak ATPase activity. This Haloarcula marismortui (strain ATCC 43049 / DSM 3752 / JCM 8966 / VKM B-1809) (Halobacterium marismortui) protein is DNA mismatch repair protein MutS 1.